The sequence spans 99 residues: Putative GIY-YIG domain-containing protein 242L (99 aa).

A GIY-YIG domain is found at 5–81 (NGWNIYMVTM…KKQTKKVKLQ (77 aa)).

The polypeptide is Putative GIY-YIG domain-containing protein 242L (Invertebrate iridescent virus 6 (IIV-6)).